The primary structure comprises 331 residues: GTP 3',8-cyclase 2 (331 aa).

Residues 9–234 (PFGRRITYLR…PSLARSGGPS (226 aa)) enclose the Radical SAM core domain. A GTP-binding site is contributed by R18. Positions 25 and 29 each coordinate [4Fe-4S] cluster. An S-adenosyl-L-methionine-binding site is contributed by Y31. C32 contacts [4Fe-4S] cluster. R67 lines the GTP pocket. G71 lines the S-adenosyl-L-methionine pocket. T98 serves as a coordination point for GTP. Position 122 (S122) interacts with S-adenosyl-L-methionine. Residue K159 coordinates GTP. S-adenosyl-L-methionine is bound at residue M193. C257 and C260 together coordinate [4Fe-4S] cluster. GTP is bound at residue 262 to 264 (RVR). C274 is a binding site for [4Fe-4S] cluster.

It belongs to the radical SAM superfamily. MoaA family. In terms of assembly, monomer and homodimer. [4Fe-4S] cluster is required as a cofactor.

The catalysed reaction is GTP + AH2 + S-adenosyl-L-methionine = (8S)-3',8-cyclo-7,8-dihydroguanosine 5'-triphosphate + 5'-deoxyadenosine + L-methionine + A + H(+). It functions in the pathway cofactor biosynthesis; molybdopterin biosynthesis. In terms of biological role, catalyzes the cyclization of GTP to (8S)-3',8-cyclo-7,8-dihydroguanosine 5'-triphosphate. This chain is GTP 3',8-cyclase 2 (moaA2), found in Pseudomonas aeruginosa (strain ATCC 15692 / DSM 22644 / CIP 104116 / JCM 14847 / LMG 12228 / 1C / PRS 101 / PAO1).